The sequence spans 156 residues: Enhancer of split M1 protein (156 aa).

The N-terminal stretch at 1-19 (MMSQTLTLCCLALVACVYG) is a signal peptide. 2 Kazal-like domains span residues 23 to 81 (STND…AWCS) and 96 to 156 (KLEV…EEKC). Disulfide bonds link cysteine 29/cysteine 62, cysteine 33/cysteine 55, cysteine 102/cysteine 135, cysteine 106/cysteine 128, and cysteine 114/cysteine 156.

The protein is Enhancer of split M1 protein (Kaz-m1) of Drosophila melanogaster (Fruit fly).